A 751-amino-acid chain; its full sequence is ATP-dependent DNA helicase Hel308 (751 aa).

Residues Q20 and 39–46 contribute to the ATP site; that span reads IPTASGKT. In terms of domain architecture, Helicase ATP-binding spans 26–196; sequence EGLLDKSKNF…WLNAKLVTDE (171 aa). The DEAH box signature appears at 143–146; it reads DEIH. The Helicase C-terminal domain maps to 235–435; that stretch reads NLTDLIVDSV…VLRVHILGLI (201 aa).

The protein belongs to the helicase family. Hel308 subfamily. Monomer.

It carries out the reaction Couples ATP hydrolysis with the unwinding of duplex DNA by translocating in the 3'-5' direction.. It catalyses the reaction ATP + H2O = ADP + phosphate + H(+). In terms of biological role, DNA-dependent ATPase and 3'-5' DNA helicase that may be involved in repair of stalled replication forks. In Methanococcus vannielii (strain ATCC 35089 / DSM 1224 / JCM 13029 / OCM 148 / SB), this protein is ATP-dependent DNA helicase Hel308.